The chain runs to 424 residues: MLDIKFLRTNFEEVKAKLQHRGEDLTDFGRFEELDTRRRELLVQTEELKSKRNEVSQQISVLKREKKDAEALILEMREVGEKVKDLDNELRTVEEDLERLMLSIPNIPHESAPVGETEDDNVVARTWGEVKEFTYEPKPHWDLATDLGILDFERAGKVTGSRFVFYKGAGARLERALISFMLDLHTDEHGYEEVLPPYMVNRASMTGTGQLPKFEEDAFRIESEDYFLIPTAEVPVTNMHRDEILNKEQLPIRYAAFSSCFRSEAGSAGRDTRGLIRQHQFNKVELVKFVKPEDSYEELEKLTNDAERVLQLLELPYRVMSMCTGDLGFTAAKKYDIEVWIPSYGTYREISSCSNFEAFQARRANIRFRREPNGKPEHVHTLNGSGLAIGRTVAAILENYQQEDGTIIIPEVLRPYMGGKTVIK.

Thr-231–Glu-233 provides a ligand contact to L-serine. ATP is bound at residue Arg-262–Glu-264. Glu-285 is a binding site for L-serine. Glu-349–Ser-352 is a binding site for ATP. Ser-385 lines the L-serine pocket.

Belongs to the class-II aminoacyl-tRNA synthetase family. Type-1 seryl-tRNA synthetase subfamily. Homodimer. The tRNA molecule binds across the dimer.

It localises to the cytoplasm. It catalyses the reaction tRNA(Ser) + L-serine + ATP = L-seryl-tRNA(Ser) + AMP + diphosphate + H(+). The enzyme catalyses tRNA(Sec) + L-serine + ATP = L-seryl-tRNA(Sec) + AMP + diphosphate + H(+). It functions in the pathway aminoacyl-tRNA biosynthesis; selenocysteinyl-tRNA(Sec) biosynthesis; L-seryl-tRNA(Sec) from L-serine and tRNA(Sec): step 1/1. Its function is as follows. Catalyzes the attachment of serine to tRNA(Ser). Is also able to aminoacylate tRNA(Sec) with serine, to form the misacylated tRNA L-seryl-tRNA(Sec), which will be further converted into selenocysteinyl-tRNA(Sec). The sequence is that of Serine--tRNA ligase from Bacillus cereus (strain B4264).